The following is a 530-amino-acid chain: Na(+)/H(+) antiporter NhaB (530 aa).

12 helical membrane-spanning segments follow: residues 13–33 (FLGKAPDWYKLAIISFLIINP), 98–118 (LLLVFMVAGIYFMKELLLFIF), 123–145 (LGIQSKILLSVAFCVAAAFLSAF), 149–166 (LTVIAVVISVAVGFYSIY), 205–225 (LLMHAGVGTALGGVMTMVGEP), 238–258 (FGEFIIRMLPVTLPVFFCGIL), 308–328 (IAVWLIVGLALHVAEVGLIGL), 330–350 (VIILATAFTGVIEEHSMGKAF), 356–376 (FTALLAVFFAVVAVIIDQALF), 393–413 (LALFYVANGILSMVSDNVFVG), 451–471 (ATPNGQAAFLFLLTSALAPLI), and 480–500 (IMALPYTIVLALVGLAGIVFF).

The protein belongs to the NhaB Na(+)/H(+) (TC 2.A.34) antiporter family.

It is found in the cell inner membrane. The catalysed reaction is 2 Na(+)(in) + 3 H(+)(out) = 2 Na(+)(out) + 3 H(+)(in). Na(+)/H(+) antiporter that extrudes sodium in exchange for external protons. This chain is Na(+)/H(+) antiporter NhaB, found in Vibrio atlanticus (strain LGP32) (Vibrio splendidus (strain Mel32)).